Consider the following 313-residue polypeptide: Putative adhesin P1-like protein MPN_202 (313 aa).

A compositionally biased stretch (low complexity) spans 1-16; it reads MGSQNQGSTTTTSAGN. The interval 1–44 is disordered; that stretch reads MGSQNQGSTTTTSAGNPDSLVTDKVDQKGQVQTSGQNLSDTNYT. Over residues 29–44 the composition is skewed to polar residues; sequence GQVQTSGQNLSDTNYT.

The protein belongs to the adhesin P1 family.

This is Putative adhesin P1-like protein MPN_202 from Mycoplasma pneumoniae (strain ATCC 29342 / M129 / Subtype 1) (Mycoplasmoides pneumoniae).